The following is a 238-amino-acid chain: tRNA (guanine-N(7)-)-methyltransferase (238 aa).

S-adenosyl-L-methionine-binding residues include Glu68, Glu93, Asp120, and Asp143. Asp143 is an active-site residue. Substrate contacts are provided by residues Lys147, Asp179, and 216–219 (TKFE).

It belongs to the class I-like SAM-binding methyltransferase superfamily. TrmB family.

It carries out the reaction guanosine(46) in tRNA + S-adenosyl-L-methionine = N(7)-methylguanosine(46) in tRNA + S-adenosyl-L-homocysteine. It functions in the pathway tRNA modification; N(7)-methylguanine-tRNA biosynthesis. Its function is as follows. Catalyzes the formation of N(7)-methylguanine at position 46 (m7G46) in tRNA. The polypeptide is tRNA (guanine-N(7)-)-methyltransferase (Shewanella sp. (strain W3-18-1)).